The following is a 347-amino-acid chain: D-alanine--D-alanine ligase (347 aa).

The region spanning 134-332 (KLYAKDLGVK…LAQSLPKTPK (199 aa)) is the ATP-grasp domain. ATP is bound at residue 161 to 216 (LIKFNFPFIVKPSNAGSSLGVNVVKEEKELVYALDSAFEYSKEVLIEPFIQGVKEY). Residues Asp288, Glu300, and Asn302 each coordinate Mg(2+).

It belongs to the D-alanine--D-alanine ligase family. The cofactor is Mg(2+). Requires Mn(2+) as cofactor.

It localises to the cytoplasm. The catalysed reaction is 2 D-alanine + ATP = D-alanyl-D-alanine + ADP + phosphate + H(+). Its pathway is cell wall biogenesis; peptidoglycan biosynthesis. In terms of biological role, cell wall formation. This is D-alanine--D-alanine ligase from Helicobacter pylori (strain P12).